The chain runs to 461 residues: Fumarate hydratase class II (461 aa).

Substrate contacts are provided by residues 99–101, arginine 127, 130–133, 140–142, and threonine 188; these read SGT, HPND, and SSN. The active-site Proton donor/acceptor is histidine 189. The active site involves serine 319. Residues serine 320 and 325 to 327 contribute to the substrate site; that span reads KVN.

It belongs to the class-II fumarase/aspartase family. Fumarase subfamily. As to quaternary structure, homotetramer.

It localises to the cytoplasm. It carries out the reaction (S)-malate = fumarate + H2O. The protein operates within carbohydrate metabolism; tricarboxylic acid cycle; (S)-malate from fumarate: step 1/1. Functionally, involved in the TCA cycle. Catalyzes the stereospecific interconversion of fumarate to L-malate. This Chromobacterium violaceum (strain ATCC 12472 / DSM 30191 / JCM 1249 / CCUG 213 / NBRC 12614 / NCIMB 9131 / NCTC 9757 / MK) protein is Fumarate hydratase class II.